The sequence spans 926 residues: Tyrosine-protein phosphatase non-receptor type 4 (926 aa).

In terms of domain architecture, FERM spans 29-312 (VVCNILLLDN…EHHTFFRLDR (284 aa)). 2 disordered regions span residues 380 to 412 (DDRL…TRLR) and 430 to 475 (EVFV…KNSW). 2 stretches are compositionally biased toward polar residues: residues 398-408 (NHRNSTFTQEG) and 430-456 (EVFV…SQET). Ser474 carries the phosphoserine modification. Positions 517-589 (LIRMKPDENG…DQVVLFIKAS (73 aa)) constitute a PDZ domain. The Tyrosine-protein phosphatase domain occupies 655-911 (VLTQFDQLYR…RFVCEAILKV (257 aa)). Substrate contacts are provided by residues Asp820, 852 to 858 (CSAGIGR), and Gln896. The Phosphocysteine intermediate role is filled by Cys852.

The protein belongs to the protein-tyrosine phosphatase family. Non-receptor class subfamily. Interacts with MAPK12 (via C-terminus); this interaction abolishes PTPN4 catalytic autoinhibition and thus activates the phosphatase activity. As to quaternary structure, (Microbial infection) Interacts with attenuated rabies virus protein G; this interaction is required for virally-induced apoptosis. Post-translationally, highly phosphorylated on serine and threonine residues but not on tyrosines. Cleaved and activated by calpain I/CAPN1.

Its subcellular location is the cell membrane. It localises to the cytoplasm. The protein localises to the cytoskeleton. It carries out the reaction O-phospho-L-tyrosyl-[protein] + H2O = L-tyrosyl-[protein] + phosphate. Its function is as follows. Phosphatase that plays a role in immunity, learning, synaptic plasticity or cell homeostasis. Regulates neuronal cell homeostasis by protecting neurons against apoptosis. Negatively regulates TLR4-induced interferon beta production by dephosphorylating adapter TICAM2 and inhibiting subsequent TRAM-TRIF interaction. Also dephosphorylates the immunoreceptor tyrosine-based activation motifs/ITAMs of the TCR zeta subunit and thereby negatively regulates TCR-mediated signaling pathway. May act at junctions between the membrane and the cytoskeleton. This Homo sapiens (Human) protein is Tyrosine-protein phosphatase non-receptor type 4 (PTPN4).